A 539-amino-acid chain; its full sequence is Eukaryotic translation initiation factor 3 subunit L (539 aa).

The 209-residue stretch at 306 to 514 (TFSDILLYIQ…IHIADTKVSH (209 aa)) folds into the PCI domain.

Belongs to the eIF-3 subunit L family. As to quaternary structure, component of the eukaryotic translation initiation factor 3 (eIF-3) complex. The eIF-3 complex interacts with pix.

It localises to the cytoplasm. Component of the eukaryotic translation initiation factor 3 (eIF-3) complex, which is involved in protein synthesis of a specialized repertoire of mRNAs and, together with other initiation factors, stimulates binding of mRNA and methionyl-tRNAi to the 40S ribosome. The eIF-3 complex specifically targets and initiates translation of a subset of mRNAs involved in cell proliferation. This chain is Eukaryotic translation initiation factor 3 subunit L, found in Drosophila yakuba (Fruit fly).